We begin with the raw amino-acid sequence, 626 residues long: Methanol dehydrogenase [cytochrome c] subunit 1 (626 aa).

The N-terminal stretch at 1–27 is a signal peptide; it reads MSRFVTSVSALAMLALAPAALSSVAYA. Cys-130 and Cys-131 form a disulfide bridge. Ca(2+) is bound by residues Glu-204 and Asn-288. The active-site Proton acceptor is the Asp-330. Residues Cys-413 and Cys-442 are joined by a disulfide bond.

This sequence belongs to the bacterial PQQ dehydrogenase family. As to quaternary structure, heterotetramer composed of 2 alpha and 2 beta subunits. Pyrroloquinoline quinone serves as cofactor. Requires Ca(2+) as cofactor.

It is found in the cell inner membrane. It catalyses the reaction 2 Fe(III)-[cytochrome cL] + a primary alcohol = 2 Fe(II)-[cytochrome cL] + an aldehyde + 2 H(+). In terms of biological role, catalyzes the oxidation of primary alcohols including methanol. In Methylobacterium organophilum, this protein is Methanol dehydrogenase [cytochrome c] subunit 1 (moxF).